An 804-amino-acid polypeptide reads, in one-letter code: Ion-translocating oxidoreductase complex subunit C (804 aa).

4Fe-4S ferredoxin-type domains follow at residues 366 to 397 (SEMG…QQLY) and 407 to 436 (KARA…VQYY). [4Fe-4S] cluster-binding residues include Cys-377, Cys-380, Cys-383, Cys-387, Cys-416, Cys-419, Cys-422, and Cys-426. Disordered regions lie at residues 466–532 (RLER…EVRV) and 567–804 (KAAQ…MQED). 7 stretches are compositionally biased toward low complexity: residues 484 to 495 (SVASSDAGAIAA), 567 to 582 (KAAQ…APQQ), 592 to 619 (AAVA…EAPQ), 629 to 660 (KAAV…QQSA), 668 to 693 (AAVA…ATEA), 706 to 731 (AAVA…ATEA), and 744 to 769 (AAVA…ATEA).

Belongs to the 4Fe4S bacterial-type ferredoxin family. RnfC subfamily. As to quaternary structure, the complex is composed of six subunits: RnfA, RnfB, RnfC, RnfD, RnfE and RnfG. Requires [4Fe-4S] cluster as cofactor.

It is found in the cell inner membrane. In terms of biological role, part of a membrane-bound complex that couples electron transfer with translocation of ions across the membrane. This is Ion-translocating oxidoreductase complex subunit C from Erwinia tasmaniensis (strain DSM 17950 / CFBP 7177 / CIP 109463 / NCPPB 4357 / Et1/99).